The sequence spans 475 residues: Mucin-1 (475 aa).

The first 23 residues, 1-23, serve as a signal peptide directing secretion; it reads MTPGTQSLFFLLLLLTVLTVVTG. Residues 23–252 form a disordered region; sequence GSGHASSTPG…SPLTSSNHST (230 aa). The Extracellular portion of the chain corresponds to 24–380; it reads SGHASSTPGG…QSGAGVPGWG (357 aa). A compositionally biased stretch (polar residues) spans 38-48; the sequence is SATQRSSMPSS. The segment covering 54 to 75 has biased composition (low complexity); sequence VSMTSSVLSSHSPGSGSSTTQG. A run of 5 repeats spans residues 86-105, 106-125, 126-145, 146-165, and 166-185. The segment at 86-185 is 5 X 20 AA approximate tandem repeats; that stretch reads PASGSAATWG…HNVTSASGSA (100 aa). The span at 90-102 shows a compositional bias: polar residues; sequence SAATWGQDVTSVP. T93 and T99 each carry an O-linked (GalNAc...) threonine glycan. Residue S100 is glycosylated (O-linked (GalNAc...) serine). The O-linked (GalNAc...) threonine glycan is linked to T104. Positions 109–122 are enriched in polar residues; that stretch reads GSTTSPAQDVTSAP. N-linked (GlcNAc...) asparagine glycosylation is present at N177. Residues 180–190 are compositionally biased toward low complexity; that stretch reads SASGSASGSAS. Polar residues-rich tracts occupy residues 191–213 and 233–252; these read TLVH…TPFS and DASS…NHST. N-linked (GlcNAc...) asparagine glycosylation is found at N195, N249, N275, and N353. Residues 259-368 enclose the SEA domain; it reads GVSFFFLSFH…VSVSDVPFPF (110 aa). A helical membrane pass occupies residues 381–401; it reads IALLVLVCVLVALAIVYLIAL. Over 402–475 the chain is Cytoplasmic; the sequence is AVCQCRRKNY…PAVAATSANL (74 aa). 2 S-palmitoyl cysteine lipidation sites follow: C404 and C406. Positions 412-448 are interaction with P53; that stretch reads GQLDIFPARDAYHPMSEYPTYHTHGRYVPPSSTNRSP. Y423 carries the post-translational modification Phosphotyrosine; by PDGFR. The short motif at 423-426 is the Interaction with GRB2 element; the sequence is YHPM. Y432 carries the post-translational modification Phosphotyrosine. A disordered region spans residues 435-460; it reads HGRYVPPSSTNRSPYEKVSEGNGGSS. Residue Y438 is modified to Phosphotyrosine; by PDGFR. The segment at 443-450 is required for interaction with GSK3B; it reads STNRSPYE. T444 carries the phosphothreonine; by PKC/PRKCD modification. The residue at position 447 (S447) is a Phosphoserine; by GSK3-beta. At Y449 the chain carries Phosphotyrosine; by CSK, EGFR and SRC. The short motif at 449–452 is the Interaction with SRC and ESR1 element; sequence YEKV. The tract at residues 453–461 is required for interaction with beta- and gamma-catenins; that stretch reads SEGNGGSSL. Y463 is subject to Phosphotyrosine. Residues 463–466 carry the Required for interaction with AP1S2 motif; sequence YTNP.

As to quaternary structure, the alpha subunit forms a tight, non-covalent heterodimeric complex with the proteolytically-released beta-subunit. Binds directly the SH2 domain of GRB2, and forms a MUC1/GRB2/SOS1 complex involved in RAS signaling. The cytoplasmic tail (MUC1CT) interacts with several proteins such as SRC, CTNNB1 and ERBs. Interaction with the SH2 domain of CSK decreases interaction with GSK3B. Interacts with CTNNB1/beta-catenin and JUP/gamma-catenin and promotes cell adhesion. Interaction with JUP/gamma-catenin is induced by heregulin. Binds PRKCD, ERBB2, ERBB3 and ERBB4. Heregulin (HRG) stimulates the interaction with ERBB2 and, to a much lesser extent, the interaction with ERBB3 and ERBB4. Interacts with P53 in response to DNA damage. Interacts with KLF4. Interacts with estrogen receptor alpha/ESR1, through its DNA-binding domain, and stimulates its transcription activity. Binds ADAM17. Post-translationally, probably both N- and O-glycosylated (in repeat region). Proteolytic cleavage in the SEA domain occurs in the endoplasmic reticulum by an autoproteolytic mechanism and requires the full-length SEA domain as well as requiring a Ser, Thr or Cys residue at the P + 1 site. Ectodomain shedding is mediated by ADAM17 in uterine epithelial cells. In terms of processing, dual palmitoylation on cysteine residues in the CQC motif is required for recycling from endosomes back to the plasma membrane. Post-translationally, phosphorylated on tyrosines and serine residues in the C-terminal. Phosphorylation on tyrosines in the C-terminal increases the nuclear location of MUC1 and beta-catenin. Phosphorylation by PKC delta induces binding of MUC1 to beta-catenin/CTNNB1 and thus decreases the formation of the beta-catenin/E-cadherin complex. Src-mediated phosphorylation inhibits interaction with GSK3B. Csk- or Src- or EGFR-mediated phosphorylation on Tyr-449 increases binding to beta-catenin/CTNNB1. GSK3B-mediated phosphorylation on Ser-447 decreases this interaction but restores the formation of the beta-cadherin/E-cadherin complex. On T-cell receptor activation, phosphorylated by LCK. PDGFR-mediated phosphorylation increases nuclear colocalization of MUC1CT and CTNNB1.

The protein resides in the apical cell membrane. It localises to the cell membrane. It is found in the cytoplasm. The protein localises to the nucleus. Functionally, the alpha subunit has cell adhesive properties. Can act both as an adhesion and an anti-adhesion protein. May provide a protective layer on epithelial cells against bacterial and enzyme attack. Its function is as follows. The beta subunit contains a C-terminal domain which is involved in cell signaling, through phosphorylations and protein-protein interactions. Modulates signaling in ERK, Src and NF-kappaB pathways. In activated T-cells, influences directly or indirectly the Ras/MAPK pathway. Promotes tumor progression. Regulates P53-mediated transcription and determines cell fate in the genotoxic stress response. Binds, together with KLF4, the PE21 promoter element of P53 and represses P53 activity. The polypeptide is Mucin-1 (MUC1) (Hylobates lar (Lar gibbon)).